Here is a 133-residue protein sequence, read N- to C-terminus: MKTFPVSIVTPDGPVYEKEVEMVSVKAESGEMGILPGHIPTVAPLKISAVRLKNGGHTDYVAVSGGFIEVRPDKVTVLSSSAEEANHIDIHRANEAKRRAEQRLQDKQAHVDFKRAEMALQRAVNRLNVSDMK.

It belongs to the ATPase epsilon chain family. As to quaternary structure, F-type ATPases have 2 components, CF(1) - the catalytic core - and CF(0) - the membrane proton channel. CF(1) has five subunits: alpha(3), beta(3), gamma(1), delta(1), epsilon(1). CF(0) has three main subunits: a, b and c.

It localises to the cell membrane. Functionally, produces ATP from ADP in the presence of a proton gradient across the membrane. The polypeptide is ATP synthase epsilon chain (Bacillus cereus (strain ATCC 14579 / DSM 31 / CCUG 7414 / JCM 2152 / NBRC 15305 / NCIMB 9373 / NCTC 2599 / NRRL B-3711)).